A 135-amino-acid chain; its full sequence is Transcriptional regulator HosA (135 aa).

Positions 4–134 constitute an HTH marR-type domain; sequence RNKAFHQLRQ…FMQLVRKMMN (131 aa). Residues 48–71 constitute a DNA-binding region (H-T-H motif); sequence QVALIEAAVSTKATLAEMLARMEN.

Its function is as follows. Involved in the temperature-dependent positive control of flagellum-driven swimming motility and cellular aggregation. Regulates fliC expression by directly interacting with fliC promoter. The polypeptide is Transcriptional regulator HosA (hosA) (Escherichia coli O127:H6 (strain E2348/69 / EPEC)).